The primary structure comprises 633 residues: DNA topoisomerase 4 subunit B (633 aa).

Residues Y5, N45, D72, 113–119 (GLHGVGA), and K337 contribute to the ATP site. Residues 419-534 (KELFIVEGDS…LGHVYLALPP (116 aa)) enclose the Toprim domain. Residues E425, D499, and D501 each contribute to the Mg(2+) site.

It belongs to the type II topoisomerase family. ParE type 2 subfamily. In terms of assembly, heterotetramer composed of ParC and ParE. Mg(2+) serves as cofactor. It depends on Mn(2+) as a cofactor. Ca(2+) is required as a cofactor.

It carries out the reaction ATP-dependent breakage, passage and rejoining of double-stranded DNA.. Its function is as follows. Topoisomerase IV is essential for chromosome segregation. It relaxes supercoiled DNA. Performs the decatenation events required during the replication of a circular DNA molecule. In Mycoplasma genitalium (strain ATCC 33530 / DSM 19775 / NCTC 10195 / G37) (Mycoplasmoides genitalium), this protein is DNA topoisomerase 4 subunit B.